Consider the following 228-residue polypeptide: UPF0173 metal-dependent hydrolase lwe1590 (228 aa).

This sequence belongs to the UPF0173 family.

This chain is UPF0173 metal-dependent hydrolase lwe1590, found in Listeria welshimeri serovar 6b (strain ATCC 35897 / DSM 20650 / CCUG 15529 / CIP 8149 / NCTC 11857 / SLCC 5334 / V8).